The following is a 52-amino-acid chain: Insulin (52 aa).

Intrachain disulfides connect C9/C38, C21/C51, and C37/C42.

Belongs to the insulin family. As to quaternary structure, heterodimer of a B chain and an A chain linked by two disulfide bonds.

The protein localises to the secreted. In terms of biological role, insulin decreases blood glucose concentration. It increases cell permeability to monosaccharides, amino acids and fatty acids. It accelerates glycolysis, the pentose phosphate cycle, and glycogen synthesis in liver. This Piaractus mesopotamicus (Small-scaled pacu) protein is Insulin (ins).